A 150-amino-acid polypeptide reads, in one-letter code: SsrA-binding protein (150 aa).

Belongs to the SmpB family.

It is found in the cytoplasm. Required for rescue of stalled ribosomes mediated by trans-translation. Binds to transfer-messenger RNA (tmRNA), required for stable association of tmRNA with ribosomes. tmRNA and SmpB together mimic tRNA shape, replacing the anticodon stem-loop with SmpB. tmRNA is encoded by the ssrA gene; the 2 termini fold to resemble tRNA(Ala) and it encodes a 'tag peptide', a short internal open reading frame. During trans-translation Ala-aminoacylated tmRNA acts like a tRNA, entering the A-site of stalled ribosomes, displacing the stalled mRNA. The ribosome then switches to translate the ORF on the tmRNA; the nascent peptide is terminated with the 'tag peptide' encoded by the tmRNA and targeted for degradation. The ribosome is freed to recommence translation, which seems to be the essential function of trans-translation. The chain is SsrA-binding protein from Nitratiruptor sp. (strain SB155-2).